The primary structure comprises 328 residues: Spermatogenesis- and oogenesis-specific basic helix-loop-helix-containing protein 1 (328 aa).

The bHLH domain occupies 53-104 (SCLRRNVISERERRKRMSLSCERLRALLPQFDGRREDMASVLEMSVQFLRLA). The segment at 290–328 (EAGSALGSDVDDGTSFLLTAGPSSWPGEWGPGFRAGPPA) is disordered. The span at 310-321 (GPSSWPGEWGPG) shows a compositional bias: low complexity.

In terms of assembly, forms both hetero- and homodimers with SOHLH2.

The protein resides in the cytoplasm. It is found in the nucleus. Transcription regulator of both male and female germline differentiation. Suppresses genes involved in spermatogonial stem cells maintenance, and induces genes important for spermatogonial differentiation. Coordinates oocyte differentiation without affecting meiosis I. This chain is Spermatogenesis- and oogenesis-specific basic helix-loop-helix-containing protein 1 (SOHLH1), found in Homo sapiens (Human).